Here is a 194-residue protein sequence, read N- to C-terminus: Protein GrpE 2 (194 aa).

The span at 1–17 (MNDIDKHKKETQTESKN) shows a compositional bias: basic and acidic residues. Positions 1–29 (MNDIDKHKKETQTESKNDLNNTTITQNNV) are disordered. The span at 18–29 (DLNNTTITQNNV) shows a compositional bias: polar residues.

This sequence belongs to the GrpE family. Homodimer.

Its subcellular location is the cytoplasm. Its function is as follows. Participates actively in the response to hyperosmotic and heat shock by preventing the aggregation of stress-denatured proteins, in association with DnaK and GrpE. It is the nucleotide exchange factor for DnaK and may function as a thermosensor. Unfolded proteins bind initially to DnaJ; upon interaction with the DnaJ-bound protein, DnaK hydrolyzes its bound ATP, resulting in the formation of a stable complex. GrpE releases ADP from DnaK; ATP binding to DnaK triggers the release of the substrate protein, thus completing the reaction cycle. Several rounds of ATP-dependent interactions between DnaJ, DnaK and GrpE are required for fully efficient folding. The sequence is that of Protein GrpE 2 from Buchnera aphidicola subsp. Baizongia pistaciae (strain Bp).